A 68-amino-acid polypeptide reads, in one-letter code: Large ribosomal subunit protein bL32 (68 aa).

This sequence belongs to the bacterial ribosomal protein bL32 family.

The chain is Large ribosomal subunit protein bL32 from Orientia tsutsugamushi (strain Ikeda) (Rickettsia tsutsugamushi).